The chain runs to 952 residues: RNA polymerase-associated protein RapA (952 aa).

The region spanning 164–334 (EVGRRYAPRV…FARLRLLDPD (171 aa)) is the Helicase ATP-binding domain. Residue 177 to 184 (DEVGLGKT) participates in ATP binding. Residues 280–283 (DEAH) carry the DEAH box motif. Residues 492–668 (RVNWLLELLK…GKSDGLESLI (177 aa)) enclose the Helicase C-terminal domain.

It belongs to the SNF2/RAD54 helicase family. RapA subfamily. As to quaternary structure, interacts with the RNAP. Has a higher affinity for the core RNAP than for the holoenzyme. Its ATPase activity is stimulated by binding to RNAP.

Its function is as follows. Transcription regulator that activates transcription by stimulating RNA polymerase (RNAP) recycling in case of stress conditions such as supercoiled DNA or high salt concentrations. Probably acts by releasing the RNAP, when it is trapped or immobilized on tightly supercoiled DNA. Does not activate transcription on linear DNA. Probably not involved in DNA repair. The chain is RNA polymerase-associated protein RapA from Aliivibrio fischeri (strain ATCC 700601 / ES114) (Vibrio fischeri).